Consider the following 67-residue polypeptide: Large ribosomal subunit protein uL29 (67 aa).

This sequence belongs to the universal ribosomal protein uL29 family.

The protein is Large ribosomal subunit protein uL29 of Methanosarcina acetivorans (strain ATCC 35395 / DSM 2834 / JCM 12185 / C2A).